The sequence spans 215 residues: Cytochrome b6 (215 aa).

Residues 32–52 traverse the membrane as a helical segment; it reads IFYCLGGITLTCFLVQVATGF. Cysteine 35 serves as a coordination point for heme c. Residues histidine 86 and histidine 100 each coordinate heme b. The next 3 membrane-spanning stretches (helical) occupy residues 90–110, 116–136, and 186–206; these read ASMMVLMMILHVFRVYLTGGF, LTWVTGVVLGVLTASFGVTGY, and LHTFVLPLLTAVFMLMHFLMI. Residues histidine 187 and histidine 202 each coordinate heme b.

It belongs to the cytochrome b family. PetB subfamily. In terms of assembly, the 4 large subunits of the cytochrome b6-f complex are cytochrome b6, subunit IV (17 kDa polypeptide, PetD), cytochrome f and the Rieske protein, while the 4 small subunits are PetG, PetL, PetM and PetN. The complex functions as a dimer. It depends on heme b as a cofactor. Heme c serves as cofactor.

Its subcellular location is the plastid. It localises to the chloroplast thylakoid membrane. Functionally, component of the cytochrome b6-f complex, which mediates electron transfer between photosystem II (PSII) and photosystem I (PSI), cyclic electron flow around PSI, and state transitions. The chain is Cytochrome b6 from Gossypium barbadense (Sea Island cotton).